Consider the following 490-residue polypeptide: Cysteine desulfurase, mitochondrial (490 aa).

Pyridoxal 5'-phosphate contacts are provided by residues 161–162 (AT), N241, Q269, and 289–291 (SSH). Position 292 is an N6-(pyridoxal phosphate)lysine (K292). T329 is a pyridoxal 5'-phosphate binding site. The active-site Cysteine persulfide intermediate is C414. Position 414 (C414) interacts with [2Fe-2S] cluster.

The protein belongs to the class-V pyridoxal-phosphate-dependent aminotransferase family. NifS/IscS subfamily. Pyridoxal 5'-phosphate is required as a cofactor.

The protein resides in the mitochondrion. It catalyses the reaction (sulfur carrier)-H + L-cysteine = (sulfur carrier)-SH + L-alanine. In terms of biological role, catalyzes the removal of elemental sulfur from cysteine to produce alanine. It supplies the inorganic sulfur for iron-sulfur (Fe-S) clusters. Plays a role in both tRNA-processing and mitochondrial metabolism. Involved in the 2-thio-modification of both 5-carboxymethylaminomethyl-2-thiouridine in mitochondrial tRNAs and 5-methoxycarbonylmethyl-2-thiouridine (mcm5s2U) in cytoplasmic tRNAs. The chain is Cysteine desulfurase, mitochondrial from Eremothecium gossypii (strain ATCC 10895 / CBS 109.51 / FGSC 9923 / NRRL Y-1056) (Yeast).